A 284-amino-acid polypeptide reads, in one-letter code: Nucleotide-binding protein CPS_4546 (284 aa).

Position 8-15 (Gly-8–Ser-15) interacts with ATP. Residue Asp-56–Asn-59 coordinates GTP.

The protein belongs to the RapZ-like family.

Functionally, displays ATPase and GTPase activities. This chain is Nucleotide-binding protein CPS_4546, found in Colwellia psychrerythraea (strain 34H / ATCC BAA-681) (Vibrio psychroerythus).